A 684-amino-acid chain; its full sequence is Glycine--tRNA ligase beta subunit (684 aa).

This sequence belongs to the class-II aminoacyl-tRNA synthetase family. Tetramer of two alpha and two beta subunits.

It localises to the cytoplasm. It catalyses the reaction tRNA(Gly) + glycine + ATP = glycyl-tRNA(Gly) + AMP + diphosphate. In Pseudomonas fluorescens (strain SBW25), this protein is Glycine--tRNA ligase beta subunit.